A 211-amino-acid polypeptide reads, in one-letter code: DNA/RNA-binding protein ALBA2 (211 aa).

The segment covering 84 to 99 has biased composition (basic and acidic residues); it reads NSGLKKNAKNEDKKSG. Residues 84 to 121 form a disordered region; the sequence is NSGLKKNAKNEDKKSGDEEEEEEEEEEDEENNKNKEAN. Positions 100-113 are enriched in acidic residues; it reads DEEEEEEEEEEDEE.

This sequence belongs to the histone-like Alba family. As to quaternary structure, identified in a TARE6-associated complex consisting of over 30 proteins and including ALBA1, ALBA2 and ALBA4; the complex binds to the non-coding subtelomeric repeat region TARE6.

The protein resides in the nucleus. It is found in the chromosome. The protein localises to the telomere. It localises to the cytoplasm. Possesses DNA- and RNA-binding activities. Binds to DNA with relaxed sequence specificity. Associates with the subtelomeric TARE6 repeats. The polypeptide is DNA/RNA-binding protein ALBA2 (Plasmodium falciparum (isolate 3D7)).